Reading from the N-terminus, the 245-residue chain is 1-(5-phosphoribosyl)-5-[(5-phosphoribosylamino)methylideneamino] imidazole-4-carboxamide isomerase (245 aa).

The active-site Proton acceptor is aspartate 7. Aspartate 129 (proton donor) is an active-site residue.

This sequence belongs to the HisA/HisF family.

It localises to the cytoplasm. The enzyme catalyses 1-(5-phospho-beta-D-ribosyl)-5-[(5-phospho-beta-D-ribosylamino)methylideneamino]imidazole-4-carboxamide = 5-[(5-phospho-1-deoxy-D-ribulos-1-ylimino)methylamino]-1-(5-phospho-beta-D-ribosyl)imidazole-4-carboxamide. It functions in the pathway amino-acid biosynthesis; L-histidine biosynthesis; L-histidine from 5-phospho-alpha-D-ribose 1-diphosphate: step 4/9. In Psychromonas ingrahamii (strain DSM 17664 / CCUG 51855 / 37), this protein is 1-(5-phosphoribosyl)-5-[(5-phosphoribosylamino)methylideneamino] imidazole-4-carboxamide isomerase.